Reading from the N-terminus, the 124-residue chain is Large ribosomal subunit protein bL12 (124 aa).

This sequence belongs to the bacterial ribosomal protein bL12 family. As to quaternary structure, homodimer. Part of the ribosomal stalk of the 50S ribosomal subunit. Forms a multimeric L10(L12)X complex, where L10 forms an elongated spine to which 2 to 4 L12 dimers bind in a sequential fashion. Binds GTP-bound translation factors.

Its function is as follows. Forms part of the ribosomal stalk which helps the ribosome interact with GTP-bound translation factors. Is thus essential for accurate translation. The chain is Large ribosomal subunit protein bL12 from Desulfitobacterium hafniense (strain DSM 10664 / DCB-2).